Here is a 76-residue protein sequence, read N- to C-terminus: MLQLKLFAVLLTCLLLLGQVNSSPVPEVSSAKRSRRMTPFWRGVSLRPIGASCRDDSECITRLCRKRRCSLSVAQE.

A signal peptide spans 1–22; the sequence is MLQLKLFAVLLTCLLLLGQVNS. Positions 23-36 are excised as a propeptide; that stretch reads SPVPEVSSAKRSRR. 2 cysteine pairs are disulfide-bonded: Cys-53-Cys-64 and Cys-59-Cys-69.

It belongs to the LEAP2 family.

The protein localises to the secreted. Functionally, has an antimicrobial activity. This chain is Liver-expressed antimicrobial peptide 2 (Leap2), found in Mus musculus (Mouse).